The following is a 62-amino-acid chain: uncharacterized protein (62 aa).

The protein resides in the plastid. Its subcellular location is the chloroplast. This is an uncharacterized protein from Porphyra purpurea (Red seaweed).